A 100-amino-acid chain; its full sequence is Protein alpha-2 (100 aa).

This chain is Protein alpha-2, found in Bos taurus (Bovine).